The following is an 833-amino-acid chain: Leucine--tRNA ligase (833 aa).

Residues 41 to 52 (PYPSGAGLHVGH) carry the 'HIGH' region motif. Residues 610–614 (KMSKS) carry the 'KMSKS' region motif. Lys-613 serves as a coordination point for ATP.

This sequence belongs to the class-I aminoacyl-tRNA synthetase family.

The protein localises to the cytoplasm. It catalyses the reaction tRNA(Leu) + L-leucine + ATP = L-leucyl-tRNA(Leu) + AMP + diphosphate. The chain is Leucine--tRNA ligase from Streptococcus pyogenes serotype M18 (strain MGAS8232).